Reading from the N-terminus, the 273-residue chain is Pantothenate synthetase (273 aa).

Residue 27-34 (MGALHDGH) coordinates ATP. The active-site Proton donor is His-34. Gln-58 contributes to the (R)-pantoate binding site. Gln-58 serves as a coordination point for beta-alanine. Residue 144 to 147 (GKKD) participates in ATP binding. Gln-150 lines the (R)-pantoate pocket. Residues Val-173 and 181 to 184 (LSSR) each bind ATP.

The protein belongs to the pantothenate synthetase family. As to quaternary structure, homodimer.

Its subcellular location is the cytoplasm. It carries out the reaction (R)-pantoate + beta-alanine + ATP = (R)-pantothenate + AMP + diphosphate + H(+). Its pathway is cofactor biosynthesis; (R)-pantothenate biosynthesis; (R)-pantothenate from (R)-pantoate and beta-alanine: step 1/1. In terms of biological role, catalyzes the condensation of pantoate with beta-alanine in an ATP-dependent reaction via a pantoyl-adenylate intermediate. The chain is Pantothenate synthetase from Campylobacter concisus (strain 13826).